A 528-amino-acid polypeptide reads, in one-letter code: Butyrophilin subfamily 2 member A2 (528 aa).

Residues 1–29 form the signal peptide; it reads MESAAALHFSRPASLLLLLLLSLCALVSA. Residues 30–249 lie on the Extracellular side of the membrane; the sequence is QVTVVGPTDP…SFMPSVSPCA (220 aa). One can recognise an Ig-like V-type domain in the interval 31–142; the sequence is VTVVGPTDPI…SYDEAILHLI (112 aa). 3 N-linked (GlcNAc...) asparagine glycosylation sites follow: asparagine 47, asparagine 115, and asparagine 121. Cysteines 52 and 126 form a disulfide. Residues 150 to 232 form the Ig-like C2-type domain; it reads PLIEMRGHED…NNTLLSQKKE (83 aa). Residues 250–270 form a helical membrane-spanning segment; it reads VALPIVVVILMILFAVCMYWI. Residues 270-320 adopt a coiled-coil conformation; it reads INKLQKEKKILSGEKEFERETREIAVKELEKERVQKEEELQVKEKLQEELR. Residues 271-528 are Cytoplasmic-facing; sequence NKLQKEKKIL…LHRVGTHQSL (258 aa). Residues 311–507 form the B30.2/SPRY domain; the sequence is VKEKLQEELR…IFICPALTGA (197 aa).

It belongs to the immunoglobulin superfamily. BTN/MOG family. Post-translationally, N-glycosylated.

It localises to the membrane. Inhibits the proliferation of CD4 and CD8 T-cells activated by anti-CD3 antibodies, T-cell metabolism and IL2 and IFNG secretion. The polypeptide is Butyrophilin subfamily 2 member A2 (BTN2A2) (Pongo abelii (Sumatran orangutan)).